The primary structure comprises 275 residues: Biotin synthase (275 aa).

The region spanning 1 to 217 (MLCAICNVSS…DTAKTLPQCR (217 aa)) is the Radical SAM core domain. Residues Cys-13, Cys-17, and Cys-20 each contribute to the [4Fe-4S] cluster site. Residues Cys-57, Cys-92, Cys-150, and Arg-217 each coordinate [2Fe-2S] cluster.

This sequence belongs to the radical SAM superfamily. Biotin synthase family. Homodimer. It depends on [4Fe-4S] cluster as a cofactor. The cofactor is [2Fe-2S] cluster.

The enzyme catalyses (4R,5S)-dethiobiotin + (sulfur carrier)-SH + 2 reduced [2Fe-2S]-[ferredoxin] + 2 S-adenosyl-L-methionine = (sulfur carrier)-H + biotin + 2 5'-deoxyadenosine + 2 L-methionine + 2 oxidized [2Fe-2S]-[ferredoxin]. It participates in cofactor biosynthesis; biotin biosynthesis; biotin from 7,8-diaminononanoate: step 2/2. Functionally, catalyzes the conversion of dethiobiotin (DTB) to biotin by the insertion of a sulfur atom into dethiobiotin via a radical-based mechanism. In Campylobacter fetus subsp. fetus (strain 82-40), this protein is Biotin synthase.